The chain runs to 299 residues: Pectin lyase (299 aa).

Residues Met-1–Ala-18 form the signal peptide. Composition is skewed to low complexity over residues Arg-82 to Asp-91 and Ser-232 to Thr-246. Disordered regions lie at residues Arg-82–Ser-105 and Ser-227–Thr-246.

Belongs to the polysaccharide lyase 1 family.

It localises to the secreted. It carries out the reaction Eliminative cleavage of (1-&gt;4)-alpha-D-galacturonan methyl ester to give oligosaccharides with 4-deoxy-6-O-methyl-alpha-D-galact-4-enuronosyl groups at their non-reducing ends.. The polypeptide is Pectin lyase (PELA) (Peyronellaea pinodes (Pea foot rot fungus)).